A 570-amino-acid polypeptide reads, in one-letter code: Proline--tRNA ligase (570 aa).

The protein belongs to the class-II aminoacyl-tRNA synthetase family. ProS type 1 subfamily. In terms of assembly, homodimer.

It is found in the cytoplasm. The catalysed reaction is tRNA(Pro) + L-proline + ATP = L-prolyl-tRNA(Pro) + AMP + diphosphate. Functionally, catalyzes the attachment of proline to tRNA(Pro) in a two-step reaction: proline is first activated by ATP to form Pro-AMP and then transferred to the acceptor end of tRNA(Pro). As ProRS can inadvertently accommodate and process non-cognate amino acids such as alanine and cysteine, to avoid such errors it has two additional distinct editing activities against alanine. One activity is designated as 'pretransfer' editing and involves the tRNA(Pro)-independent hydrolysis of activated Ala-AMP. The other activity is designated 'posttransfer' editing and involves deacylation of mischarged Ala-tRNA(Pro). The misacylated Cys-tRNA(Pro) is not edited by ProRS. In Geobacter metallireducens (strain ATCC 53774 / DSM 7210 / GS-15), this protein is Proline--tRNA ligase.